The following is a 552-amino-acid chain: Phosphoglucomutase (552 aa).

The Phosphoserine intermediate role is filled by Ser-143. Mg(2+) contacts are provided by Ser-143, Asp-295, Asp-297, and Asp-299.

It belongs to the phosphohexose mutase family. Mg(2+) serves as cofactor.

It carries out the reaction alpha-D-glucose 1-phosphate = alpha-D-glucose 6-phosphate. The protein operates within glycolipid metabolism; diglucosyl-diacylglycerol biosynthesis. Catalyzes the interconversion between glucose-6-phosphate and alpha-glucose-1-phosphate. This is the first step in the biosynthesis of diglucosyl-diacylglycerol (Glc2-DAG), i.e. the predominant glycolipid found in the S.aureus membrane, which is also used as a membrane anchor for lipoteichoic acid (LTA). The polypeptide is Phosphoglucomutase (pgcA) (Staphylococcus aureus (strain USA300)).